Consider the following 260-residue polypeptide: Phosphate import ATP-binding protein PstB 1 (260 aa).

Residues 8–255 form the ABC transporter domain; it reads TETKNVYDVL…PEHKRTEDYV (248 aa). 46-53 lines the ATP pocket; that stretch reads GPSGCGKS.

The protein belongs to the ABC transporter superfamily. Phosphate importer (TC 3.A.1.7) family. In terms of assembly, the complex is composed of two ATP-binding proteins (PstB), two transmembrane proteins (PstC and PstA) and a solute-binding protein (PstS).

The protein resides in the cell membrane. The catalysed reaction is phosphate(out) + ATP + H2O = ADP + 2 phosphate(in) + H(+). Part of the ABC transporter complex PstSACB involved in phosphate import. Responsible for energy coupling to the transport system. The sequence is that of Phosphate import ATP-binding protein PstB 1 from Shouchella clausii (strain KSM-K16) (Alkalihalobacillus clausii).